Here is a 513-residue protein sequence, read N- to C-terminus: Ribonuclease Y (513 aa).

The helical transmembrane segment at 4–24 threads the bilayer; the sequence is NTAIIIAITTGFVAFIGGYFL. A KH domain is found at 203–266; sequence TVAVIPLPNE…ETARMALEKL (64 aa). In terms of domain architecture, HD spans 329-422; that stretch reads VLKHSVEVAY…IQAADAISAA (94 aa).

The protein belongs to the RNase Y family.

The protein resides in the cell membrane. In terms of biological role, endoribonuclease that initiates mRNA decay. The chain is Ribonuclease Y from Desulforudis audaxviator (strain MP104C).